Consider the following 259-residue polypeptide: UPF0246 protein PFL_1025 (259 aa).

It belongs to the UPF0246 family.

This chain is UPF0246 protein PFL_1025, found in Pseudomonas fluorescens (strain ATCC BAA-477 / NRRL B-23932 / Pf-5).